The following is a 344-amino-acid chain: 3-isopropylmalate dehydrogenase (344 aa).

74-87 (GPKWDALPRKIRPE) contacts NAD(+). Substrate-binding residues include arginine 94, arginine 104, arginine 132, and aspartate 217. The Mg(2+) site is built by aspartate 217, aspartate 241, and aspartate 245. Residue 274-286 (GSAPDIAGKGIAN) participates in NAD(+) binding.

The protein belongs to the isocitrate and isopropylmalate dehydrogenases family. LeuB type 1 subfamily. As to quaternary structure, homodimer. The cofactor is Mg(2+). Mn(2+) is required as a cofactor.

The protein localises to the cytoplasm. The catalysed reaction is (2R,3S)-3-isopropylmalate + NAD(+) = 4-methyl-2-oxopentanoate + CO2 + NADH. The protein operates within amino-acid biosynthesis; L-leucine biosynthesis; L-leucine from 3-methyl-2-oxobutanoate: step 3/4. In terms of biological role, catalyzes the oxidation of 3-carboxy-2-hydroxy-4-methylpentanoate (3-isopropylmalate) to 3-carboxy-4-methyl-2-oxopentanoate. The product decarboxylates to 4-methyl-2 oxopentanoate. The sequence is that of 3-isopropylmalate dehydrogenase (leuB) from Thermus aquaticus.